We begin with the raw amino-acid sequence, 711 residues long: K(+)-insensitive pyrophosphate-energized proton pump (711 aa).

The next 5 membrane-spanning stretches (helical) occupy residues 7–27 (LIYG…KFIF), 58–78 (IASL…YGHL), 85–105 (ALSF…CSAL), 145–165 (LAVT…YGGL), and 179–199 (IVGF…GGGI). Lys202 is a binding site for substrate. Residues Asp205, Asp209, and Asp235 each contribute to the Mg(2+) site. 6 consecutive transmembrane segments (helical) span residues 251–271 (TAAE…IFGW), 274–294 (ILFP…GIFF), 311–331 (GYFV…KVML), 343–363 (YLLL…FVFL), 403–423 (LPVI…EMAI), and 431–451 (LYGT…ILAM). Asp459 contributes to the Mg(2+) binding site. Helical transmembrane passes span 495-515 (YAIG…LDEV), 535-555 (EVFI…STAI), 602-622 (EMVI…VILG), and 624-644 (EAAA…ALYL). 3 residues coordinate Ca(2+): Asp652, Asp678, and Asp682. Lys685 is a binding site for substrate. Residues 690–710 (PSLHVLIKLISTITLVFVALF) form a helical membrane-spanning segment.

The protein belongs to the H(+)-translocating pyrophosphatase (TC 3.A.10) family. K(+)-insensitive subfamily. In terms of assembly, homodimer. Mg(2+) serves as cofactor.

The protein localises to the cell membrane. It catalyses the reaction diphosphate + H2O + H(+)(in) = 2 phosphate + 2 H(+)(out). Its function is as follows. Proton pump that utilizes the energy of pyrophosphate hydrolysis as the driving force for proton movement across the membrane. Generates a proton motive force. The polypeptide is K(+)-insensitive pyrophosphate-energized proton pump (Caldanaerobacter subterraneus subsp. tengcongensis (strain DSM 15242 / JCM 11007 / NBRC 100824 / MB4) (Thermoanaerobacter tengcongensis)).